A 641-amino-acid chain; its full sequence is MDVLKEVLSLDQDKFDQLKETSRDKTNETDDPFENYLKDCKFKAPSNKDQSPFAKLKSLQETHSNNEAAINIIIPQLIDYLTEFTNRLSNYTQDLDFIKKKSNELQSLLEYNSTKLAHISPMVNDLMIPPELIDDIIKGKINESWQDNITFIADKEEIYNKYRSNNLDQDNKDAENSAMLAPKDFDKLCQLLDILKNVILERSKRLIISKIKTLRSHNPVPSQRIQNKLLKVQKIFPFIRDNNLSLALELRQAYCYTMKWYYREYFSRYIRSLTILQFQQIDSQFALGNGLSTTSVSGFNNSPSLFFSNYLTTSASNAFYNKLPVTDEKIDKYFQIKKRLNILTQEDNTVMVSQIAENNTTKNYIEIGFKNLNLAILDNCTVEYHFLKDFFAMNGDNFEEINGLLEQIFQPTFDEATTYTQQLIQYNYDIFGVLISIRVANQLQFESERRGIPSMFDSFLNGQLIQLWPRFQQLVDFQCESLRKAAITTNVAKYAGNSSTSNSSPLTSPHELTVQFGKFLSSFLTLAITHKQSIDERSEPLYNSIIRLRNDFETVMTKCSKKTKSPERFLATNYMYLYNNLQQLHLHLNINDSDAQNYNFDSAENVGTKVANDDDNDSSVPLIIRETENHFKTLVEAFTRN.

Positions 81–110 form a coiled coil; that stretch reads LTEFTNRLSNYTQDLDFIKKKSNELQSLLE. S602 bears the Phosphoserine mark.

This sequence belongs to the VPS52 family. Component of the Golgi-associated retrograde protein (GARP) complex, also called VFT (VPS fifty-three) complex, composed of VPS51, VPS52, VPS53 and VPS54. Also interacts with TLG1 and YPT6.

The protein localises to the golgi apparatus. The protein resides in the trans-Golgi network membrane. Its subcellular location is the endosome membrane. It localises to the cytoplasm. It is found in the cytoskeleton. Its function is as follows. Involved in retrograde transport from early and late endosomes to late Golgi by linking the vesicle through the t-SNARE TGL1 to the Golgi, leading to the membrane fusion between late Golgi and endosomal vesicles. May also be involved in the actin cytoskeleton organization. This Saccharomyces cerevisiae (strain ATCC 204508 / S288c) (Baker's yeast) protein is Vacuolar protein sorting-associated protein 52 (VPS52).